A 446-amino-acid polypeptide reads, in one-letter code: DDB1- and CUL4-associated factor 12-A (446 aa).

The segment covering 1 to 12 has biased composition (basic residues); the sequence is MTRRSVSRKRRA. The segment at 1-32 is disordered; sequence MTRRSVSRKRRANPGSGPGEQSDWDHSAHKRK. WD repeat units lie at residues 132 to 173, 177 to 215, 245 to 284, and 333 to 370; these read SHQS…PVCV, GHNDWIFSIAWISDTMAVSGSRDGSMGLWEMTDEVVNKS, PVNCKVRALAFNSNNKELGAVSLDGFFHLWKAEQTLSKLL, and EQGSGIRSVSFYEHIVTVGTGQGALLFYDIRAQRFLED.

The protein belongs to the WD repeat DCAF12 family. Component of the DCX(DCAF12) E3 ubiquitin ligase complex, at least composed of cul4 (cul4a or cul4b), ddb1, dcaf12 and rbx1.

Its subcellular location is the cytoplasm. It localises to the cytoskeleton. The protein resides in the microtubule organizing center. It is found in the centrosome. The protein localises to the nucleus. The protein operates within protein modification; protein ubiquitination. Substrate-recognition component of a DCX (DDB1-CUL4-X-box) E3 ubiquitin-protein ligase complex of the DesCEND (destruction via C-end degrons) pathway, which recognizes a C-degron located at the extreme C terminus of target proteins, leading to their ubiquitination and degradation. The C-degron recognized by the DesCEND pathway is usually a motif of less than ten residues and can be present in full-length proteins, truncated proteins or proteolytically cleaved forms. The DCX(DCAF12) complex specifically recognizes proteins with a diglutamate (Glu-Glu) at the C-terminus leading to their ubiquitination and degradation. Also directly recognizes the C-terminal glutamate-leucine (Glu-Leu) degron as an alternative degron in proteins leading to their ubiquitination and degradation. This Xenopus laevis (African clawed frog) protein is DDB1- and CUL4-associated factor 12-A (dcaf12-a).